A 283-amino-acid chain; its full sequence is MKLCGFDAGLDQPLFLIAGPCVIEGEQFAIDTAGQLKEMAGRLGLPFIYKSSYDKANRSSDQSFRGFGIDAGLTILDKVKKQVGVPVLTDVHTAEEAPLAASVVDVLQTPAFLCRQTDFIRAVAATGKPVNIKKGQFLAPGDMLNVVAKARHGAREAGFDGDTIMVCERGASFGYNNLVSDMRSLAIMRGTGCPVVYDATHSVQLPGGQGTSSGGQREFVPVLARAAVATGIAGIFMETHPDPCKALSDGPNAWPLPRLYDLLATLVELDRLVKSRPLAEQAL.

Belongs to the KdsA family.

The protein resides in the cytoplasm. The enzyme catalyses D-arabinose 5-phosphate + phosphoenolpyruvate + H2O = 3-deoxy-alpha-D-manno-2-octulosonate-8-phosphate + phosphate. The protein operates within carbohydrate biosynthesis; 3-deoxy-D-manno-octulosonate biosynthesis; 3-deoxy-D-manno-octulosonate from D-ribulose 5-phosphate: step 2/3. Its pathway is bacterial outer membrane biogenesis; lipopolysaccharide biosynthesis. The sequence is that of 2-dehydro-3-deoxyphosphooctonate aldolase from Laribacter hongkongensis (strain HLHK9).